The chain runs to 449 residues: UDP-N-acetylmuramoylalanine--D-glutamate ligase (449 aa).

ATP is bound at residue 117–123 (GSNGKTT).

Belongs to the MurCDEF family.

The protein resides in the cytoplasm. It catalyses the reaction UDP-N-acetyl-alpha-D-muramoyl-L-alanine + D-glutamate + ATP = UDP-N-acetyl-alpha-D-muramoyl-L-alanyl-D-glutamate + ADP + phosphate + H(+). It participates in cell wall biogenesis; peptidoglycan biosynthesis. Its function is as follows. Cell wall formation. Catalyzes the addition of glutamate to the nucleotide precursor UDP-N-acetylmuramoyl-L-alanine (UMA). In Exiguobacterium sibiricum (strain DSM 17290 / CCUG 55495 / CIP 109462 / JCM 13490 / 255-15), this protein is UDP-N-acetylmuramoylalanine--D-glutamate ligase.